The primary structure comprises 144 residues: Putative pre-16S rRNA nuclease (144 aa).

Belongs to the YqgF nuclease family.

It is found in the cytoplasm. Functionally, could be a nuclease involved in processing of the 5'-end of pre-16S rRNA. The sequence is that of Putative pre-16S rRNA nuclease from Symbiobacterium thermophilum (strain DSM 24528 / JCM 14929 / IAM 14863 / T).